A 359-amino-acid polypeptide reads, in one-letter code: Heat-inducible transcription repressor HrcA (359 aa).

Belongs to the HrcA family.

Functionally, negative regulator of class I heat shock genes (grpE-dnaK-dnaJ and groELS operons). Prevents heat-shock induction of these operons. The chain is Heat-inducible transcription repressor HrcA from Roseiflexus sp. (strain RS-1).